The primary structure comprises 144 residues: uncharacterized protein (144 aa).

Positions 24–67 (KLKELYQRLNQGINVEEVLKETVEDYKEKMEKYILEVLEEIEKY) form a coiled coil.

This is an uncharacterized protein from Aquifex aeolicus (strain VF5).